The following is a 269-amino-acid chain: Type II restriction enzyme SfiI (269 aa).

It catalyses the reaction Endonucleolytic cleavage of DNA to give specific double-stranded fragments with terminal 5'-phosphates.. Functionally, an F and P subtype restriction enzyme that recognizes the double-stranded sequence 5'-GGCCN(5)GGCC-3' and cleaves before N-9. In Streptomyces fimbriatus, this protein is Type II restriction enzyme SfiI (sfiIR).